The chain runs to 37 residues: MAWRNPMNTLISLLLLTLIMLAGPAVIALWYFRGRQV.

The helical transmembrane segment at 10 to 30 (LISLLLLTLIMLAGPAVIALW) threads the bilayer.

This sequence belongs to the Psb30/Ycf12 family. In terms of assembly, PSII is composed of 1 copy each of membrane proteins PsbA, PsbB, PsbC, PsbD, PsbE, PsbF, PsbH, PsbI, PsbJ, PsbK, PsbL, PsbM, PsbT, PsbX, Psb30/Ycf12, peripheral proteins PsbO, CyanoQ (PsbQ), PsbU, PsbV and a large number of cofactors. It forms dimeric complexes.

It localises to the cell inner membrane. Its function is as follows. A core subunit of photosystem II (PSII), probably helps stabilize the reaction center. This chain is Photosystem II reaction center protein Psb30, found in Gloeobacter violaceus (strain ATCC 29082 / PCC 7421).